Reading from the N-terminus, the 128-residue chain is Large ribosomal subunit protein bL20 (128 aa).

Belongs to the bacterial ribosomal protein bL20 family.

In terms of biological role, binds directly to 23S ribosomal RNA and is necessary for the in vitro assembly process of the 50S ribosomal subunit. It is not involved in the protein synthesizing functions of that subunit. The protein is Large ribosomal subunit protein bL20 of Corynebacterium efficiens (strain DSM 44549 / YS-314 / AJ 12310 / JCM 11189 / NBRC 100395).